The sequence spans 99 residues: Large ribosomal subunit protein uL23 (99 aa).

This sequence belongs to the universal ribosomal protein uL23 family. Part of the 50S ribosomal subunit. Contacts protein L29, and trigger factor when it is bound to the ribosome.

One of the early assembly proteins it binds 23S rRNA. One of the proteins that surrounds the polypeptide exit tunnel on the outside of the ribosome. Forms the main docking site for trigger factor binding to the ribosome. The protein is Large ribosomal subunit protein uL23 of Francisella tularensis subsp. holarctica (strain OSU18).